We begin with the raw amino-acid sequence, 196 residues long: MPIGVPKVPFRNPGEEDAVWVDVYNRLYRERLLFLGQEVDSEISNQLIGLMVYLSIENDTKDLYLFINSPGGWVIPGVAIYDTMQFVQPDVHTICMGLAASMGSFLLAGGEITKRLAFPHARVMIHQPASSFYEAQTGEFILEAEELLKLRESLTRVYVQRTGKPLWVVSEDMERDVFMSATEAQAHGIVDLVAVK.

Catalysis depends on S101, which acts as the Nucleophile. H126 is a catalytic residue.

Belongs to the peptidase S14 family. In terms of assembly, component of the chloroplastic Clp protease core complex.

It localises to the plastid. It is found in the chloroplast stroma. The enzyme catalyses Hydrolysis of proteins to small peptides in the presence of ATP and magnesium. alpha-casein is the usual test substrate. In the absence of ATP, only oligopeptides shorter than five residues are hydrolyzed (such as succinyl-Leu-Tyr-|-NHMec, and Leu-Tyr-Leu-|-Tyr-Trp, in which cleavage of the -Tyr-|-Leu- and -Tyr-|-Trp bonds also occurs).. Cleaves peptides in various proteins in a process that requires ATP hydrolysis. Has a chymotrypsin-like activity. Plays a major role in the degradation of misfolded proteins. This is ATP-dependent Clp protease proteolytic subunit from Gossypium hirsutum (Upland cotton).